The sequence spans 237 residues: Ribonuclease PH (237 aa).

Phosphate-binding positions include Arg-86 and 124–126 (GTR).

The protein belongs to the RNase PH family. As to quaternary structure, homohexameric ring arranged as a trimer of dimers.

The enzyme catalyses tRNA(n+1) + phosphate = tRNA(n) + a ribonucleoside 5'-diphosphate. In terms of biological role, phosphorolytic 3'-5' exoribonuclease that plays an important role in tRNA 3'-end maturation. Removes nucleotide residues following the 3'-CCA terminus of tRNAs; can also add nucleotides to the ends of RNA molecules by using nucleoside diphosphates as substrates, but this may not be physiologically important. Probably plays a role in initiation of 16S rRNA degradation (leading to ribosome degradation) during starvation. The polypeptide is Ribonuclease PH (Rhodopseudomonas palustris (strain ATCC BAA-98 / CGA009)).